Here is a 223-residue protein sequence, read N- to C-terminus: Ethylene-inducing xylanase (223 aa).

Positions 1–19 are cleaved as a signal peptide; that stretch reads MVSFTTLLAGFVAVTGVLS. Positions 34-223 constitute a GH11 domain; sequence QTIGPGTGFN…SSGNANINVS (190 aa). N-linked (GlcNAc...) asparagine glycosylation is present at Asn94. The Nucleophile role is filled by Glu119. Glu210 (proton donor) is an active-site residue.

This sequence belongs to the glycosyl hydrolase 11 (cellulase G) family. Interactc with tomato LeEix2 receptor to trigger its internalization.

The protein localises to the secreted. It carries out the reaction Endohydrolysis of (1-&gt;4)-beta-D-xylosidic linkages in xylans.. Its pathway is glycan degradation; xylan degradation. Functionally, endo-1,4-beta-xylanase involved in the hydrolysis of xylan, a major structural heterogeneous polysaccharide found in plant biomass representing the second most abundant polysaccharide in the biosphere, after cellulose. Acts as an elicitor of plant defense responses in hosts such as tobacco (Nicotiana tabacum) or tomato (Solanum lycopersicum). Induces the production of ethylene and leads alterations in membrane function with rapid efflux of potassium, uptake of calcium, alkalization of the medium, increased leakage of cellular components and necrosis in plant hosts. EIX is translocated through the xylem of the host plant to the leaf mesophyll, leading to host response to pathogen-derived extracellular proteins in tissues distant from the invading pathogen. Greatly enhances the expression of two calcineurin B-like proteins-interacting protein kinases (CIPKs) family members, OsCIPK14 and OsCIPK15, in rice cultured cells. In tomato, triggers the defense response via binding to and subsequent internalization of the LeEix2 receptor. The polypeptide is Ethylene-inducing xylanase (Hypocrea rufa (Trichoderma viride)).